We begin with the raw amino-acid sequence, 155 residues long: Dau c 1 isoallergen Dau c 1.0401 (155 aa).

Belongs to the BetVI family. As to quaternary structure, monomer. In terms of tissue distribution, expressed in roots (at protein level). Expressed in roots.

The sequence is that of Dau c 1 isoallergen Dau c 1.0401 from Daucus carota subsp. sativus (Carrot).